The sequence spans 1049 residues: RTX-III toxin determinant A from serotype 2 (1049 aa).

A run of 3 helical transmembrane segments spans residues Thr154–Ile170, Ala315–Leu331, and Leu397–Ile413. Hemolysin-type calcium-binding repeat units lie at residues Lys743–Leu760, Asn761–Leu778, Arg779–Leu796, Leu797–Leu814, Arg825–Leu842, and Asp843–Tyr860.

It belongs to the RTX prokaryotic toxin (TC 1.C.11) family. Palmitoylated by ApxIIIC. The toxin only becomes active when modified.

It localises to the secreted. The protein localises to the host cell membrane. Its function is as follows. Does not have hemolytic activity but shows a strong cytotoxicity towards alveolar macrophages and neutrophils. The chain is RTX-III toxin determinant A from serotype 2 (apxIIIA) from Actinobacillus pleuropneumoniae (Haemophilus pleuropneumoniae).